We begin with the raw amino-acid sequence, 261 residues long: GTP cyclohydrolase FolE2 (261 aa).

Belongs to the GTP cyclohydrolase IV family.

It catalyses the reaction GTP + H2O = 7,8-dihydroneopterin 3'-triphosphate + formate + H(+). It functions in the pathway cofactor biosynthesis; 7,8-dihydroneopterin triphosphate biosynthesis; 7,8-dihydroneopterin triphosphate from GTP: step 1/1. Converts GTP to 7,8-dihydroneopterin triphosphate. In Herminiimonas arsenicoxydans, this protein is GTP cyclohydrolase FolE2.